Here is a 473-residue protein sequence, read N- to C-terminus: Catalase easC (473 aa).

Residues 1-15 (MASEVSVASSGSEHS) are compositionally biased toward low complexity. The tract at residues 1-31 (MASEVSVASSGSEHSGAQKCPFQDPGLSSMD) is disordered. The active site involves His54. Heme is bound at residue Tyr344. The segment at 369-388 (DGARPEKAEMAPQKVPSQEH) is disordered.

It belongs to the catalase family. Heme serves as cofactor.

It participates in alkaloid biosynthesis; ergot alkaloid biosynthesis. Functionally, catalase; part of the gene cluster that mediates the biosynthesis of fungal ergot alkaloid. DmaW catalyzes the first step of ergot alkaloid biosynthesis by condensing dimethylallyl diphosphate (DMAP) and tryptophan to form 4-dimethylallyl-L-tryptophan. The second step is catalyzed by the methyltransferase easF that methylates 4-dimethylallyl-L-tryptophan in the presence of S-adenosyl-L-methionine, resulting in the formation of 4-dimethylallyl-L-abrine. The catalase easC and the FAD-dependent oxidoreductase easE then transform 4-dimethylallyl-L-abrine to chanoclavine-I which is further oxidized by easD in the presence of NAD(+), resulting in the formation of chanoclavine-I aldehyde. Agroclavine dehydrogenase easG then mediates the conversion of chanoclavine-I aldehyde to agroclavine via a non-enzymatic adduct reaction: the substrate is an iminium intermediate that is formed spontaneously from chanoclavine-I aldehyde in the presence of glutathione. The presence of easA is not required to complete this reaction. Further conversion of agroclavine to paspalic acid is a two-step process involving oxidation of agroclavine to elymoclavine and of elymoclavine to paspalic acid, the second step being performed by the elymoclavine oxidase cloA. Paspalic acid is then further converted to D-lysergic acid. Ergopeptines are assembled from D-lysergic acid and three different amino acids by the D-lysergyl-peptide-synthetases composed each of a monomudular and a trimodular nonribosomal peptide synthetase subunit. LpsB and lpsC encode the monomodular subunits responsible for D-lysergic acid activation and incorporation into the ergopeptine backbone. LpsA1 and A2 subunits encode the trimodular nonribosomal peptide synthetase assembling the tripeptide portion of ergopeptines. LpsA1 is responsible for formation of the major ergopeptine, ergotamine, and lpsA2 for alpha-ergocryptine, the minor ergopeptine of the total alkaloid mixture elaborated by C.purpurea. D-lysergyl-tripeptides are assembled by the nonribosomal peptide synthetases and released as N-(D-lysergyl-aminoacyl)-lactams. Cyclolization of the D-lysergyl-tripeptides is performed by the Fe(2+)/2-ketoglutarate-dependent dioxygenase easH which introduces a hydroxyl group into N-(D-lysergyl-aminoacyl)-lactam at alpha-C of the aminoacyl residue followed by spontaneous condensation with the terminal lactam carbonyl group. The polypeptide is Catalase easC (Claviceps purpurea (Ergot fungus)).